The following is an 860-amino-acid chain: MIRAKHISNLSSTARSFFLNGSRTSVTDGNSCVYSDDENCVSKRQQLRKEAGQTEKRPSSILPKPSVVGCILPGEVTKPVVPKKVDDFGRPSLLPQHVSSSPALPLKSHSVNYASTVVREEVEGKASSEPIGDQIFKAGIVAVNFLSDLSNCKIPSYDGGSDAFGLPKSCMVDPTRPISSVKSSNVKAIRREHFAKIYPRSAAKESSVGTTRNPSSNFRGAKEAERTGFVKGFRQVSNSVVGKSLPTTNNTYGKRTSVLQRPHIDSNRFVPSGFSNSSVEMMKGPSGTALTSRQYCNSGHIVENVSSVLRRFRWGPAAEEALQNLGLRIDAYQANQVLKQMNDYGNALGFFYWLKRQPGFKHDGHTYTTMVGNLGRAKQFGAINKLLDEMVRDGCQPNTVTYNRLIHSYGRANYLNEAMNVFNQMQEAGCKPDRVTYCTLIDIHAKAGFLDIAMDMYQRMQAGGLSPDTFTYSVIINCLGKAGHLPAAHKLFCEMVDQGCTPNLVTYNIMMDLHAKARNYQNALKLYRDMQNAGFEPDKVTYSIVMEVLGHCGYLEEAEAVFTEMQQKNWIPDEPVYGLLVDLWGKAGNVEKAWQWYQAMLHAGLRPNVPTCNSLLSTFLRVNKIAEAYELLQNMLALGLRPSLQTYTLLLSCCTDGRSKLDMGFCGQLMASTGHPAHMFLLKMPAAGPDGENVRNHANNFLDLMHSEDRESKRGLVDAVVDFLHKSGQKEEAGSVWEVAAQKNVFPDALREKSCSYWLINLHVMSEGTAVTALSRTLAWFRKQMLASGTCPSRIDIVTGWGRRSRVTGTSMVRQAVEELLNIFGSPFFTESGNSGCFVGSGEPLNRWLLQSHVERMHLL.

PPR repeat units lie at residues 363–397 (DGHT…GCQP), 398–432 (NTVT…GCKP), 433–467 (DRVT…GLSP), 468–502 (DTFT…GCTP), 503–537 (NLVT…GFEP), 538–572 (DKVT…NWIP), 573–607 (DEPV…GLRP), and 608–642 (NVPT…GLRP). In terms of domain architecture, Smr spans 760 to 843 (INLHVMSEGT…NSGCFVGSGE (84 aa)).

The protein belongs to the PPR family. P subfamily.

The protein is Pentatricopeptide repeat-containing protein At1g18900 of Arabidopsis thaliana (Mouse-ear cress).